Reading from the N-terminus, the 273-residue chain is Bis(5'-nucleosyl)-tetraphosphatase, symmetrical (273 aa).

This sequence belongs to the Ap4A hydrolase family.

The enzyme catalyses P(1),P(4)-bis(5'-adenosyl) tetraphosphate + H2O = 2 ADP + 2 H(+). Hydrolyzes diadenosine 5',5'''-P1,P4-tetraphosphate to yield ADP. The protein is Bis(5'-nucleosyl)-tetraphosphatase, symmetrical of Aliivibrio salmonicida (strain LFI1238) (Vibrio salmonicida (strain LFI1238)).